Here is an 81-residue protein sequence, read N- to C-terminus: ATP synthase subunit c, chloroplastic (81 aa).

The next 2 helical transmembrane spans lie at 3–23 (PLIAAASVIAAGLAVGLASIG) and 57–77 (LAFMEALTIYGLVVALALLFA).

It belongs to the ATPase C chain family. In terms of assembly, F-type ATPases have 2 components, F(1) - the catalytic core - and F(0) - the membrane proton channel. F(1) has five subunits: alpha(3), beta(3), gamma(1), delta(1), epsilon(1). F(0) has four main subunits: a(1), b(1), b'(1) and c(10-14). The alpha and beta chains form an alternating ring which encloses part of the gamma chain. F(1) is attached to F(0) by a central stalk formed by the gamma and epsilon chains, while a peripheral stalk is formed by the delta, b and b' chains.

Its subcellular location is the plastid. It localises to the chloroplast thylakoid membrane. F(1)F(0) ATP synthase produces ATP from ADP in the presence of a proton or sodium gradient. F-type ATPases consist of two structural domains, F(1) containing the extramembraneous catalytic core and F(0) containing the membrane proton channel, linked together by a central stalk and a peripheral stalk. During catalysis, ATP synthesis in the catalytic domain of F(1) is coupled via a rotary mechanism of the central stalk subunits to proton translocation. In terms of biological role, key component of the F(0) channel; it plays a direct role in translocation across the membrane. A homomeric c-ring of between 10-14 subunits forms the central stalk rotor element with the F(1) delta and epsilon subunits. The sequence is that of ATP synthase subunit c, chloroplastic from Pisum sativum (Garden pea).